Reading from the N-terminus, the 308-residue chain is Probable GTP 3',8-cyclase (308 aa).

The Radical SAM core domain maps to 4–222 (RFGRPLEDLR…KKLIRKKHFR (219 aa)). Arginine 13 is a binding site for GTP. The [4Fe-4S] cluster site is built by cysteine 20, cysteine 24, and cysteine 27. A GTP-binding site is contributed by lysine 60. Glycine 64 is a binding site for S-adenosyl-L-methionine. Threonine 90 lines the GTP pocket. Serine 114 provides a ligand contact to S-adenosyl-L-methionine. Lysine 151 contributes to the GTP binding site. Cysteine 245 and cysteine 248 together coordinate [4Fe-4S] cluster. GTP is bound at residue 250–252 (RIR). Cysteine 262 provides a ligand contact to [4Fe-4S] cluster.

It belongs to the radical SAM superfamily. MoaA family. [4Fe-4S] cluster serves as cofactor.

The enzyme catalyses GTP + AH2 + S-adenosyl-L-methionine = (8S)-3',8-cyclo-7,8-dihydroguanosine 5'-triphosphate + 5'-deoxyadenosine + L-methionine + A + H(+). It participates in cofactor biosynthesis; molybdopterin biosynthesis. In terms of biological role, catalyzes the cyclization of GTP to (8S)-3',8-cyclo-7,8-dihydroguanosine 5'-triphosphate. The sequence is that of Probable GTP 3',8-cyclase from Saccharolobus solfataricus (strain ATCC 35092 / DSM 1617 / JCM 11322 / P2) (Sulfolobus solfataricus).